A 136-amino-acid chain; its full sequence is uncharacterized protein (136 aa).

Helical transmembrane passes span Phe-36–Ile-56 and Phe-63–Ser-83.

It localises to the cell membrane. This is an uncharacterized protein from Mycoplasma pneumoniae (strain ATCC 29342 / M129 / Subtype 1) (Mycoplasmoides pneumoniae).